The primary structure comprises 132 residues: Agouti-signaling protein (132 aa).

The N-terminal stretch at 1-22 (MDVTRLLLATLLVFLCFFTAYS) is a signal peptide. Asn39 carries N-linked (GlcNAc...) asparagine glycosylation. The interval 61-87 (QISRKEAEKKRSSKKEASMKKVARPRT) is disordered. The segment covering 63–79 (SRKEAEKKRSSKKEASM) has biased composition (basic and acidic residues). Disulfide bonds link Cys93/Cys108, Cys100/Cys114, Cys107/Cys125, Cys111/Cys132, and Cys116/Cys123. Positions 93–132 (CVATRDSCKPPAPACCDPCAFCQCRFFRSACSCRVLSLNC) constitute an Agouti domain.

The protein localises to the secreted. Involved in the regulation of melanogenesis. The binding of ASP to MC1R precludes alpha-MSH initiated signaling and thus blocks production of cAMP, leading to a down-regulation of eumelanogenesis (brown/black pigment) and thus increasing synthesis of pheomelanin (yellow/red pigment). In Macaca hecki (Heck's macaque), this protein is Agouti-signaling protein (ASIP).